Reading from the N-terminus, the 645-residue chain is Acetyl-coenzyme A synthetase (645 aa).

Residues 190–193 and Thr-309 contribute to the CoA site; that span reads RGGR. ATP is bound by residues 385–387, 409–414, Asp-498, and Arg-513; these read GEP and DTWWQT. Ser-521 is a binding site for CoA. Arg-524 is an ATP binding site. Val-535, His-537, and Val-540 together coordinate Mg(2+). CoA is bound at residue Arg-582. N6-acetyllysine is present on Lys-607.

Belongs to the ATP-dependent AMP-binding enzyme family. Mg(2+) is required as a cofactor. Post-translationally, acetylated. Deacetylation by the SIR2-homolog deacetylase activates the enzyme.

The enzyme catalyses acetate + ATP + CoA = acetyl-CoA + AMP + diphosphate. In terms of biological role, catalyzes the conversion of acetate into acetyl-CoA (AcCoA), an essential intermediate at the junction of anabolic and catabolic pathways. AcsA undergoes a two-step reaction. In the first half reaction, AcsA combines acetate with ATP to form acetyl-adenylate (AcAMP) intermediate. In the second half reaction, it can then transfer the acetyl group from AcAMP to the sulfhydryl group of CoA, forming the product AcCoA. The chain is Acetyl-coenzyme A synthetase from Methylocella silvestris (strain DSM 15510 / CIP 108128 / LMG 27833 / NCIMB 13906 / BL2).